The following is a 275-amino-acid chain: Mitochondrial prohibitin complex protein 1 (275 aa).

The stretch at 180-213 forms a coiled coil; the sequence is REFTEAVEMKQVAQQEAEKARYLVEKAEQMKIAA.

It belongs to the prohibitin family. As to quaternary structure, high molecular weight complex that consist of phb-1 and phb-2.

The protein resides in the mitochondrion inner membrane. Its function is as follows. PHB proteins are essential during embryonic development and are required for somatic and germline differentiation in the larval gonad. A deficiency in PHB proteins results in altered mitochondrial biogenesis in body wall muscle cells. This chain is Mitochondrial prohibitin complex protein 1 (phb-1), found in Caenorhabditis elegans.